The sequence spans 967 residues: MAKGFYISKSLGILGILLGVAAVCTIIALSVVYSQEKNKNANSSPVASTTPSASATTNPASATTLDQSKAWNRYRLPNTLKPDSYRVTLRPYLTPNDRGLYVFKGSSTVRFTCKEATDVIIIHSKKLNYTLSQGHRVVLRGVGGSQPPDIDKTELVEPTEYLVVHLKGSLVKDSQYEMDSEFEGELADDLAGFYRSEYMEGNVRKVVATTQMQAADARKSFPCFDEPAMKAEFNITLIHPKDLTALSNMLPKGPSTPLPEDPNWNVTEFHTTPKMSTYLLAFIVSEFDYVEKQASNGVLIRIWARPSAIAAGHGDYALNVTGPILNFFAGHYDTPYPLPKSDQIGLPDFNAGAMENWGLVTYRENSLLFDPLSSSSSNKERVVTVIAHELAHQWFGNLVTIEWWNDLWLNEGFASYVEYLGADYAEPTWNLKDLMVLNDVYRVMAVDALASSHPLSTPASEINTPAQISELFDAISYSKGASVLRMLSSFLSEDVFKQGLASYLHTFAYQNTIYLNLWDHLQEAVNNRSIQLPTTVRDIMNRWTLQMGFPVITVDTSTGTLSQEHFLLDPDSNVTRPSEFNYVWIVPITSIRDGRQQQDYWLIDVRAQNDLFSTSGNEWVLLNLNVTGYYRVNYDEENWRKIQTQLQRDHSAIPVINRAQIINDAFNLASAHKVPVTLALNNTLFLIEERQYMPWEAALSSLSYFKLMFDRSEVYGPMKNYLKKQVTPLFIHFRNNTNNWREIPENLMDQYSEVNAISTACSNGVPECEEMVSGLFKQWMENPNNNPIHPNLRSTVYCNAIAQGGEEEWDFAWEQFRNATLVNEADKLRAALACSKELWILNRYLSYTLNPDLIRKQDATSTIISITNNVIGQGLVWDFVQSNWKKLFNDYGGGSFSFSNLIQAVTRRFSTEYELQQLEQFKKDNEETGFGSGTRALEQALEKTKANIKWVKENKEVVLQWFTENSK.

Residues 2 to 8 are Cytoplasmic-facing; sequence AKGFYIS. A helical; Signal-anchor for type II membrane protein membrane pass occupies residues 9 to 32; the sequence is KSLGILGILLGVAAVCTIIALSVV. A cytosolic Ser/Thr-rich junction region spans residues 33–68; sequence YSQEKNKNANSSPVASTTPSASATTNPASATTLDQS. At 33-967 the chain is on the extracellular side; that stretch reads YSQEKNKNAN…VLQWFTENSK (935 aa). A disordered region spans residues 40–62; sequence NANSSPVASTTPSASATTNPASA. Positions 41-62 are enriched in low complexity; that stretch reads ANSSPVASTTPSASATTNPASA. The metalloprotease stretch occupies residues 69 to 967; sequence KAWNRYRLPN…VLQWFTENSK (899 aa). N-linked (GlcNAc...) asparagine glycosylation occurs at Asn-128. Position 176 is a sulfotyrosine (Tyr-176). N-linked (GlcNAc...) asparagine glycosylation is found at Asn-234 and Asn-265. A necessary and sufficient to mediate interaction with HCoV-229E region spans residues 288 to 295; the sequence is DYVEKQAS. N-linked (GlcNAc...) asparagine glycosylation is present at Asn-319. 352 to 356 lines the substrate pocket; that stretch reads GAMEN. A Zn(2+)-binding site is contributed by His-388. The Proton acceptor role is filled by Glu-389. 2 residues coordinate Zn(2+): His-392 and Glu-411. Tyr-419 and Tyr-424 each carry sulfotyrosine. Asn-527, Asn-573, Asn-625, Asn-681, and Asn-735 each carry an N-linked (GlcNAc...) asparagine glycan. Intrachain disulfides connect Cys-761-Cys-768 and Cys-798-Cys-834. An N-linked (GlcNAc...) asparagine glycan is attached at Asn-818. Tyr-913 is modified (sulfotyrosine).

The protein belongs to the peptidase M1 family. In terms of assembly, homodimer. Interacts with SLC6A19. (Microbial infection) Interacts with the S1 domain of human coronavirus 229E/HCoV-229E spike protein. Requires Zn(2+) as cofactor. Sulfated. In terms of processing, N- and O-glycosylated. Post-translationally, may undergo proteolysis and give rise to a soluble form. In terms of tissue distribution, expressed in epithelial cells of the kidney, intestine, and respiratory tract; granulocytes, monocytes, fibroblasts, endothelial cells, cerebral pericytes at the blood-brain barrier, synaptic membranes of cells in the CNS. Also expressed in endometrial stromal cells, but not in the endometrial glandular cells. Found in the vasculature of tissues that undergo angiogenesis and in malignant gliomas and lymph node metastases from multiple tumor types but not in blood vessels of normal tissues. A soluble form has been found in plasma. It is found to be elevated in plasma and effusions of cancer patients.

Its subcellular location is the cell membrane. The enzyme catalyses Release of an N-terminal amino acid, Xaa-|-Yaa- from a peptide, amide or arylamide. Xaa is preferably Ala, but may be most amino acids including Pro (slow action). When a terminal hydrophobic residue is followed by a prolyl residue, the two may be released as an intact Xaa-Pro dipeptide.. Its function is as follows. Broad specificity aminopeptidase which plays a role in the final digestion of peptides generated from hydrolysis of proteins by gastric and pancreatic proteases. Also involved in the processing of various peptides including peptide hormones, such as angiotensin III and IV, neuropeptides, and chemokines. May also be involved the cleavage of peptides bound to major histocompatibility complex class II molecules of antigen presenting cells. May have a role in angiogenesis and promote cholesterol crystallization. May have a role in amino acid transport by acting as binding partner of amino acid transporter SLC6A19 and regulating its activity. In terms of biological role, (Microbial infection) Acts as a receptor for human coronavirus 229E/HCoV-229E. In case of human coronavirus 229E (HCoV-229E) infection, serves as receptor for HCoV-229E spike glycoprotein. Functionally, (Microbial infection) Mediates as well Human cytomegalovirus (HCMV) infection. This is Aminopeptidase N (ANPEP) from Homo sapiens (Human).